The chain runs to 954 residues: Glycine dehydrogenase (decarboxylating) (954 aa).

The span at 1–13 shows a compositional bias: polar residues; the sequence is MTELLQSLSTQNE. Positions 1-24 are disordered; sequence MTELLQSLSTQNEFVARHNGPNKS. Lysine 704 carries the post-translational modification N6-(pyridoxal phosphate)lysine.

The protein belongs to the GcvP family. In terms of assembly, the glycine cleavage system is composed of four proteins: P, T, L and H. It depends on pyridoxal 5'-phosphate as a cofactor.

The catalysed reaction is N(6)-[(R)-lipoyl]-L-lysyl-[glycine-cleavage complex H protein] + glycine + H(+) = N(6)-[(R)-S(8)-aminomethyldihydrolipoyl]-L-lysyl-[glycine-cleavage complex H protein] + CO2. In terms of biological role, the glycine cleavage system catalyzes the degradation of glycine. The P protein binds the alpha-amino group of glycine through its pyridoxal phosphate cofactor; CO(2) is released and the remaining methylamine moiety is then transferred to the lipoamide cofactor of the H protein. The sequence is that of Glycine dehydrogenase (decarboxylating) from Vibrio campbellii (strain ATCC BAA-1116).